The sequence spans 469 residues: Cytoplasmic tRNA 2-thiolation protein 2 (469 aa).

The protein belongs to the CTU2/NCS2 family.

It localises to the cytoplasm. The protein operates within tRNA modification; 5-methoxycarbonylmethyl-2-thiouridine-tRNA biosynthesis. Its function is as follows. Plays a central role in 2-thiolation of mcm(5)S(2)U at tRNA wobble positions of tRNA(Lys), tRNA(Glu) and tRNA(Gln). May act by forming a heterodimer with NCS6 that ligates sulfur from thiocarboxylated URM1 onto the uridine of tRNAs at wobble position. Prior mcm(5) tRNA modification by the elongator complex is required for 2-thiolation. May also be involved in protein urmylation. The polypeptide is Cytoplasmic tRNA 2-thiolation protein 2 (Candida glabrata (strain ATCC 2001 / BCRC 20586 / JCM 3761 / NBRC 0622 / NRRL Y-65 / CBS 138) (Yeast)).